A 149-amino-acid polypeptide reads, in one-letter code: Ribosomal RNA large subunit methyltransferase H (149 aa).

S-adenosyl-L-methionine contacts are provided by residues Leu71, Gly98, and 117–122; that span reads LSKLTL.

This sequence belongs to the RNA methyltransferase RlmH family. Homodimer.

The protein localises to the cytoplasm. The catalysed reaction is pseudouridine(1915) in 23S rRNA + S-adenosyl-L-methionine = N(3)-methylpseudouridine(1915) in 23S rRNA + S-adenosyl-L-homocysteine + H(+). Its function is as follows. Specifically methylates the pseudouridine at position 1915 (m3Psi1915) in 23S rRNA. This is Ribosomal RNA large subunit methyltransferase H from Campylobacter jejuni subsp. jejuni serotype O:6 (strain 81116 / NCTC 11828).